Reading from the N-terminus, the 162-residue chain is Protein NrdI (162 aa).

This sequence belongs to the NrdI family.

Probably involved in ribonucleotide reductase function. In Streptococcus pyogenes serotype M3 (strain ATCC BAA-595 / MGAS315), this protein is Protein NrdI.